We begin with the raw amino-acid sequence, 337 residues long: Palmitoyltransferase ZDHHC15 (337 aa).

Residues 1–20 (MRRGWKMALSGGLRCCRRVL) lie on the Cytoplasmic side of the membrane. Residues 21–41 (SWVPVLVIVLVVLWSYYAYVF) form a helical membrane-spanning segment. Residues 42–56 (ELCLVTVLSPAEKVI) are Lumenal-facing. Residues 57-77 (YLILYHAIFVFFTWTYWKSIF) form a helical membrane-spanning segment. The Cytoplasmic segment spans residues 78–172 (TLPQQPNQKF…NNCIGFSNYK (95 aa)). The DHHC domain occupies 129–179 (RFCDRCHLIKPDRCHHCSVCAMCVLKMDHHCPWVNNCIGFSNYKFFLQFLA). Residues Cys131, Cys134, His144, Cys145, Cys148, Cys151, and His158 each coordinate Zn(2+). Cys159 functions as the S-palmitoyl cysteine intermediate in the catalytic mechanism. A Zn(2+)-binding site is contributed by Cys165. Residues 173-193 (FFLQFLAYSVLYCLYIATTVF) traverse the membrane as a helical segment. The Lumenal portion of the chain corresponds to 194–210 (SYFIKYWRGELPSVRSK). Residues 211–234 (FHVLFLLFVACMFFVSLVILFGYH) form a helical membrane-spanning segment. Residues 235 to 337 (CWLVSRNKTT…SSSLAVETET (103 aa)) lie on the Cytoplasmic side of the membrane. A disordered region spans residues 306–337 (PLLANEETWEDNEDDNQDYPEGSSSLAVETET). A compositionally biased stretch (acidic residues) spans 312-323 (ETWEDNEDDNQD). Over residues 327-337 (GSSSLAVETET) the composition is skewed to polar residues.

This sequence belongs to the DHHC palmitoyltransferase family. In terms of processing, autopalmitoylated (in vitro). In terms of tissue distribution, expressed in placenta, liver, lung, kidney, heart and brain.

The protein resides in the golgi apparatus membrane. The protein localises to the postsynaptic density. The enzyme catalyses L-cysteinyl-[protein] + hexadecanoyl-CoA = S-hexadecanoyl-L-cysteinyl-[protein] + CoA. The catalysed reaction is L-cysteinyl-[protein] + tetradecanoyl-CoA = S-tetradecanoyl-L-cysteinyl-[protein] + CoA. It catalyses the reaction L-cysteinyl-[protein] + octadecanoyl-CoA = S-octadecanoyl-L-cysteinyl-[protein] + CoA. Functionally, palmitoyltransferase that catalyzes the addition of palmitate onto various protein substrates. Has no stringent fatty acid selectivity and in addition to palmitate can also transfer onto target proteins myristate from tetradecanoyl-CoA and stearate from octadecanoyl-CoA. Palmitoylates IGF2R and SORT1, promoting their partitioning to an endosomal membrane subdomain where they can interact with the retromer cargo-selective complex. Thereby, regulates retrograde transport from endosomes to the Golgi apparatus of these lysosomal sorting receptors and plays a role in trafficking of lysosomal proteins. In the nervous system, catalyzes the palmitoylation of DLG4/PSD95 and regulates its synaptic clustering and function in synaptogenesis. Could be involved in the differentiation of dopaminergic neurons and the development of the diencephalon. Could also catalyze the palmitoylation of GAP43. Could also palmitoylate DNAJC5 and regulate its localization to the Golgi membrane. Could also palmitoylate FYN as shown in vitro. May palmitoylate CALHM3 subunit of gustatory voltage-gated ion channels and modulate channel gating and kinetics. This is Palmitoyltransferase ZDHHC15 from Homo sapiens (Human).